The following is a 97-amino-acid chain: Large ribosomal subunit protein bL27 (97 aa).

A propeptide spanning residues 1–12 (MLNLNLANLQFM) is cleaved from the precursor. A disordered region spans residues 15-37 (KKGGGSTSNGRDSQAKRLGAKAA).

The protein belongs to the bacterial ribosomal protein bL27 family. The N-terminus is cleaved by ribosomal processing cysteine protease Prp.

This chain is Large ribosomal subunit protein bL27, found in Streptococcus suis (strain 98HAH33).